The following is a 2677-amino-acid chain: Probable helicase senataxin (2677 aa).

Lysine 339 participates in a covalent cross-link: Glycyl lysine isopeptide (Lys-Gly) (interchain with G-Cter in SUMO1). Residues serine 615, serine 642, and serine 878 each carry the phosphoserine modification. A Glycyl lysine isopeptide (Lys-Gly) (interchain with G-Cter in SUMO2) cross-link involves residue lysine 894. Residues serine 911, serine 947, serine 956, serine 1017, and serine 1019 each carry the phosphoserine modification. Residues lysine 1056 and lysine 1063 each participate in a glycyl lysine isopeptide (Lys-Gly) (interchain with G-Cter in SUMO2) cross-link. Disordered stretches follow at residues 1158-1219 (KKPK…TTVS) and 1237-1258 (PVSK…RSSN). Positions 1176 to 1187 (PSSSVRNEGQSD) are enriched in polar residues. Residues 1188–1205 (TNKRDLVGNDFKSIDRRT) are compositionally biased toward basic and acidic residues. Positions 1206–1219 (STPNSRIQRATTVS) are enriched in polar residues. Serine 1330 is modified (phosphoserine). Glycyl lysine isopeptide (Lys-Gly) (interchain with G-Cter in SUMO2) cross-links involve residues lysine 1340 and lysine 1341. The segment at 1351 to 1385 (QRQIRPKSQKNRRRLSDCESTDVKRAGSHTAQNSD) is disordered. The span at 1354–1363 (IRPKSQKNRR) shows a compositional bias: basic residues. Residues 1364–1375 (RLSDCESTDVKR) are compositionally biased toward basic and acidic residues. Serine 1366 carries the post-translational modification Phosphoserine. A Glycyl lysine isopeptide (Lys-Gly) (interchain with G-Cter in SUMO2) cross-link involves residue lysine 1415. Phosphoserine is present on serine 1489. The segment at 1579–1604 (FRKPGLPPPASKPLRPTTKIFSSKST) is disordered. Serine 1621, serine 1623, and serine 1663 each carry phosphoserine. 1963-1970 (GPPGTGKS) is an ATP binding site. Residues 2070-2087 (KKELPSHVQAMHKRKEFL) carry the Bipartite nuclear localization signal motif. Residues 2105-2136 (REIQRQELDENISKVSKERQELASKIKEVQGR) are a coiled coil. Threonine 2474 is modified (phosphothreonine). Disordered regions lie at residues 2474–2496 (THPP…SKLD), 2556–2577 (WDPQ…EPGF), and 2597–2677 (LSSH…RKLL). Residues 2560-2573 (PSSPQHPGATPPTG) are compositionally biased toward pro residues. The segment covering 2628–2671 (ELCHRREARAFSEGEQEKCGSETHHTRRNSRWDKRTLEQEDSSS) has biased composition (basic and acidic residues). The interval 2661 to 2677 (KRTLEQEDSSSKKRKLL) is necessary for nuclear localization.

Belongs to the DNA2/NAM7 helicase family. Homodimer. Interacts with PER2; the interaction inhibits termination of circadian target genes. Interacts with CHD4, POLR2A, PRKDC and TRIM28. Interacts with UBE2I. Interacts (via N-terminus domain) with EXOSC9 (via C-terminus region); the interaction enhances SETX sumoylation. Interacts with NCL (via N-terminus domain). Interacts with PABPN1, PABPC1 and SF3B1. Interacts with SMN1/SMN2 and POLR2A; SMN1/SMN2 recruits SETX to POLR2A. Ubiquitinated. Post-translationally, sumoylated preferentially with SUMO2 or SUMO3. As to expression, highly expressed in skeletal muscle. Expressed in heart, fibroblast, placenta and liver. Weakly expressed in brain and lung. Expressed in the cortex of the kidney (highly expressed in tubular epithelial cells but low expression in the glomerulus).

The protein resides in the nucleus. Its subcellular location is the nucleoplasm. The protein localises to the nucleolus. It localises to the cytoplasm. It is found in the chromosome. The protein resides in the telomere. Its subcellular location is the cell projection. The protein localises to the axon. It localises to the growth cone. In terms of biological role, probable RNA/DNA helicase involved in diverse aspects of RNA metabolism and genomic integrity. Plays a role in transcription regulation by its ability to modulate RNA Polymerase II (Pol II) binding to chromatin and through its interaction with proteins involved in transcription. Contributes to the mRNA splicing efficiency and splice site selection. Required for the resolution of R-loop RNA-DNA hybrid formation at G-rich pause sites located downstream of the poly(A) site, allowing XRN2 recruitment and XRN2-mediated degradation of the downstream cleaved RNA and hence efficient RNA polymerase II (RNAp II) transcription termination. Required for the 3' transcriptional termination of PER1 and CRY2, thus playing an important role in the circadian rhythm regulation. Involved in DNA double-strand breaks damage response generated by oxidative stress. In association with RRP45, targets the RNA exosome complex to sites of transcription-induced DNA damage. Plays a role in the development and maturation of germ cells: essential for male meiosis, acting at the interface of transcription and meiotic recombination, and in the process of gene silencing during meiotic sex chromosome inactivation (MSCI). May be involved in telomeric stability through the regulation of telomere repeat-containing RNA (TERRA) transcription. Plays a role in neurite outgrowth in hippocampal cells through FGF8-activated signaling pathways. Inhibits retinoic acid-induced apoptosis. This Homo sapiens (Human) protein is Probable helicase senataxin.